The sequence spans 360 residues: Peptide chain release factor 1 (360 aa).

Q235 is subject to N5-methylglutamine.

This sequence belongs to the prokaryotic/mitochondrial release factor family. Post-translationally, methylated by PrmC. Methylation increases the termination efficiency of RF1.

The protein localises to the cytoplasm. In terms of biological role, peptide chain release factor 1 directs the termination of translation in response to the peptide chain termination codons UAG and UAA. This chain is Peptide chain release factor 1, found in Cupriavidus taiwanensis (strain DSM 17343 / BCRC 17206 / CCUG 44338 / CIP 107171 / LMG 19424 / R1) (Ralstonia taiwanensis (strain LMG 19424)).